A 61-amino-acid polypeptide reads, in one-letter code: Sperm protamine P1 (61 aa).

The tract at residues 1–61 (MARYRHSRSR…RYSRRRRRRY (61 aa)) is disordered.

The protein belongs to the protamine P1 family. As to expression, testis.

The protein localises to the nucleus. The protein resides in the chromosome. In terms of biological role, protamines substitute for histones in the chromatin of sperm during the haploid phase of spermatogenesis. They compact sperm DNA into a highly condensed, stable and inactive complex. The protein is Sperm protamine P1 (PRM1) of Setonix brachyurus (Quokka).